A 345-amino-acid polypeptide reads, in one-letter code: 4-hydroxyproline 2-epimerase (345 aa).

Residue Q85 participates in substrate binding. The Proton acceptor role is filled by S93. Substrate-binding positions include 94 to 95 (GS) and D251. The active-site Proton donor is C255. Position 256–257 (256–257 (GT)) interacts with substrate.

Belongs to the proline racemase family.

The enzyme catalyses trans-4-hydroxy-L-proline = cis-4-hydroxy-D-proline. Its function is as follows. Catalyzes the epimerization of trans-4-hydroxy-L-proline (t4LHyp) to cis-4-hydroxy-D-proline (c4DHyp). May be involved in a degradation pathway of t4LHyp. Can also catalyze the epimerization of trans-3-hydroxy-L-proline (t3LHyp) to cis-3-hydroxy-D-proline (c3DHyp) in vitro, albeit with 2-fold lower efficiency. Displays no proline racemase activity. This Rhizobium etli (strain ATCC 51251 / DSM 11541 / JCM 21823 / NBRC 15573 / CFN 42) protein is 4-hydroxyproline 2-epimerase.